Consider the following 278-residue polypeptide: HTH-type transcriptional activator RhaS (278 aa).

The region spanning 174-272 is the HTH araC/xylS-type domain; sequence NQLMAWLEDH…NWSPRDIRQG (99 aa). 2 consecutive DNA-binding regions (H-T-H motif) follow at residues 191 to 212 and 239 to 262; these read EAVA…KQHT and VTEI…RREF.

In terms of assembly, binds DNA as a dimer.

It is found in the cytoplasm. Functionally, activates expression of the rhaBAD and rhaT operons. The protein is HTH-type transcriptional activator RhaS of Salmonella arizonae (strain ATCC BAA-731 / CDC346-86 / RSK2980).